The chain runs to 153 residues: Peptide methionine sulfoxide reductase B6 (153 aa).

The 122-residue stretch at 28-149 (NEEWRTVLSP…NSVALKFSSA (122 aa)) folds into the MsrB domain. 4 residues coordinate Zn(2+): Cys67, Cys70, Cys113, and Cys116. Cys85 and Cys138 form a disulfide bridge. Catalysis depends on Cys138, which acts as the Nucleophile.

It belongs to the MsrB Met sulfoxide reductase family. The cofactor is Zn(2+).

Its subcellular location is the cytoplasm. The protein resides in the cytosol. The catalysed reaction is L-methionyl-[protein] + [thioredoxin]-disulfide + H2O = L-methionyl-(R)-S-oxide-[protein] + [thioredoxin]-dithiol. In terms of biological role, catalyzes the reduction of methionine sulfoxide (MetSO) to methionine in proteins. Plays a protective role against oxidative stress by restoring activity to proteins that have been inactivated by methionine oxidation. MSRB family specifically reduces the MetSO R-enantiomer. This is Peptide methionine sulfoxide reductase B6 (MSRB6) from Arabidopsis thaliana (Mouse-ear cress).